A 295-amino-acid chain; its full sequence is Protoheme IX farnesyltransferase (295 aa).

A run of 9 helical transmembrane segments spans residues 8-28 (VTKP…FLLA), 35-55 (YTLF…GCVF), 84-104 (VSLV…WFGA), 107-127 (LACW…SLYM), 132-152 (VYGT…GYCA), 162-182 (LILL…IAIF), 208-228 (ITLY…GGYA), 233-253 (LVVA…GYKV), and 264-284 (FVFS…DFMV).

It belongs to the UbiA prenyltransferase family. Protoheme IX farnesyltransferase subfamily.

It is found in the cell inner membrane. The enzyme catalyses heme b + (2E,6E)-farnesyl diphosphate + H2O = Fe(II)-heme o + diphosphate. Its pathway is porphyrin-containing compound metabolism; heme O biosynthesis; heme O from protoheme: step 1/1. In terms of biological role, converts heme B (protoheme IX) to heme O by substitution of the vinyl group on carbon 2 of heme B porphyrin ring with a hydroxyethyl farnesyl side group. This is Protoheme IX farnesyltransferase from Enterobacter sp. (strain 638).